The primary structure comprises 695 residues: Nucleoprotein (695 aa).

2 coiled-coil regions span residues 316 to 341 (VNVG…RRHE) and 372 to 399 (QTLA…VEDQ). 3 disordered regions span residues 423-458 (VQAR…SFVD), 483-515 (TSRE…TNPI), and 527-612 (PVQE…DTRA). Composition is skewed to polar residues over residues 495–505 (RQSQDLNNSQG) and 537–552 (TTDS…SDNE). A PTAP/PSAP motif motif is present at residues 603–606 (PSAP).

Belongs to the filoviruses nucleoprotein family. As to quaternary structure, homooligomer. Homomultimerizes to form the nucleocapsid. Binds to viral genomic RNA. Interacts with VP35 and VP30 to form the nucleocapsid. Also interacts with VP24 and VP40. Phosphorylated.

It localises to the virion. Its subcellular location is the host cytoplasm. Functionally, encapsidates the genome, protecting it from nucleases. The encapsidated genomic RNA is termed the nucleocapsid and serves as template for transcription and replication. During replication, encapsidation by NP is coupled to RNA synthesis and all replicative products are resistant to nucleases. The chain is Nucleoprotein (NP) from Chlorocebus aethiops (Green monkey).